A 76-amino-acid chain; its full sequence is Adropin (76 aa).

The first 33 residues, Met1–Ala33, serve as a signal peptide directing secretion. A disordered region spans residues Ile41 to Pro76. Positions Ser52–Lys65 are enriched in pro residues.

The protein resides in the secreted. Its function is as follows. Involved in the regulation of glucose homeostasis and lipid metabolism. This is Adropin (ENHO) from Bos taurus (Bovine).